A 113-amino-acid chain; its full sequence is Protein translation factor SUI1 homolog (113 aa).

Belongs to the SUI1 family.

In terms of biological role, probably involved in translation. The sequence is that of Protein translation factor SUI1 homolog from Spuriopimpinella brachycarpa (Chamnamul).